The following is a 378-amino-acid chain: MSQQTTPAEQKSLQRKKPPFRADQVGSLLRSEPVKKARLQKAAGEMTAEQLRQIENDEIIRIVEKQKETGLNVVTDGEFRRAWWHFDFLENLDGVEPFTPEQGIQFHNVQTKARGIKVTGDIDFSTHPMLEDYSFLHSIAGDATPKMTIPSPNMLFFRGKLEKDEYKNDYQLFQHDVSKAYKKAIQAFYDRGCRYLQLDDTAWAVFLSEKGLKQIEAFGTTPDELRQLFAKSINDAIADRPDDLTVTMHICRGNFQSTWTAEGGYDAAAETIFDGLNLDGLFLEYDDSRSGGFEPLRYVKRSDLQLVLGLVTSKFGELENPDDVKRRIEEASRYVSLDQLCLSPQCGFASTEEGNKLTEEQQWAKLRHVVEIANDVWK.

Over residues 1–11 the composition is skewed to polar residues; it reads MSQQTTPAEQK. Residues 1–33 are disordered; it reads MSQQTTPAEQKSLQRKKPPFRADQVGSLLRSEP.

This sequence to B.subtilis YxjH.

This is an uncharacterized protein from Bacillus subtilis (strain 168).